A 344-amino-acid polypeptide reads, in one-letter code: Dihydroorotate dehydrogenase (quinone) (344 aa).

FMN-binding positions include 65–69 (AGLDK) and Thr89. Lys69 contributes to the substrate binding site. 114–118 (NRMGF) contacts substrate. Asn145 and Asn178 together coordinate FMN. Position 178 (Asn178) interacts with substrate. Residue Ser181 is the Nucleophile of the active site. Asn183 contacts substrate. Residues Lys223 and Thr251 each contribute to the FMN site. 252-253 (NT) lines the substrate pocket. FMN is bound by residues Gly274, Gly303, and 324 to 325 (YT).

The protein belongs to the dihydroorotate dehydrogenase family. Type 2 subfamily. Monomer. It depends on FMN as a cofactor.

The protein localises to the cell membrane. The enzyme catalyses (S)-dihydroorotate + a quinone = orotate + a quinol. It participates in pyrimidine metabolism; UMP biosynthesis via de novo pathway; orotate from (S)-dihydroorotate (quinone route): step 1/1. Catalyzes the conversion of dihydroorotate to orotate with quinone as electron acceptor. In Ralstonia nicotianae (strain ATCC BAA-1114 / GMI1000) (Ralstonia solanacearum), this protein is Dihydroorotate dehydrogenase (quinone).